The primary structure comprises 132 residues: Methenyltetrahydromethanopterin cyclohydrolase (132 aa).

It belongs to the MCH family.

The protein localises to the cytoplasm. The enzyme catalyses 5,10-methenyl-5,6,7,8-tetrahydromethanopterin + H2O = N(5)-formyl-5,6,7,8-tetrahydromethanopterin + H(+). Its pathway is one-carbon metabolism; formaldehyde degradation; formate from formaldehyde (H(4)MPT route): step 3/5. Catalyzes the hydrolysis of methenyl-H(4)MPT(+) to 5-formyl-H(4)MPT. The polypeptide is Methenyltetrahydromethanopterin cyclohydrolase (mch) (Methylomonas rubra).